Consider the following 164-residue polypeptide: 16S rRNA aminocarboxypropyltransferase (164 aa).

4 residues coordinate S-adenosyl-L-methionine: Thr18, Ile66, Leu87, and Ser106.

It belongs to the TDD superfamily. TSR3 family.

It localises to the cytoplasm. The enzyme catalyses an N(1)-methylpseudouridine in rRNA + S-adenosyl-L-methionine = N(1)-methyl-N(3)-[(3S)-3-amino-3-carboxypropyl]pseudouridine in rRNA + S-methyl-5'-thioadenosine + H(+). Functionally, aminocarboxypropyltransferase that catalyzes the aminocarboxypropyl transfer on pseudouridine corresponding to position 914 in M.jannaschii 16S rRNA. It constitutes the last step in biosynthesis of the hypermodified N1-methyl-N3-(3-amino-3-carboxypropyl) pseudouridine (m1acp3-Psi). The sequence is that of 16S rRNA aminocarboxypropyltransferase from Thermoplasma volcanium (strain ATCC 51530 / DSM 4299 / JCM 9571 / NBRC 15438 / GSS1).